The chain runs to 353 residues: Photosystem II protein D1 (353 aa).

Threonine 2 bears the N-acetylthreonine mark. The residue at position 2 (threonine 2) is a Phosphothreonine. A run of 3 helical transmembrane segments spans residues 29 to 46 (NIGW…TATS), 118 to 133 (HFLL…EWEL), and 142 to 156 (WIAV…AATA). Histidine 118 lines the chlorophyll a pocket. Residue tyrosine 126 coordinates pheophytin a. Positions 170 and 189 each coordinate [CaMn4O5] cluster. Residues 197–218 (FHMLGVAGVFGGSLFSAMHGSL) form a helical membrane-spanning segment. Histidine 198 contacts chlorophyll a. A quinone contacts are provided by residues histidine 215 and 264-265 (SF). Histidine 215 provides a ligand contact to Fe cation. Histidine 272 is a binding site for Fe cation. Residues 274–288 (FLAAWPVVGIWFTAL) form a helical membrane-spanning segment. Residues histidine 332, glutamate 333, aspartate 342, and alanine 344 each coordinate [CaMn4O5] cluster. The propeptide occupies 345-353 (AVEAPAVNG).

Belongs to the reaction center PufL/M/PsbA/D family. PSII is composed of 1 copy each of membrane proteins PsbA, PsbB, PsbC, PsbD, PsbE, PsbF, PsbH, PsbI, PsbJ, PsbK, PsbL, PsbM, PsbT, PsbX, PsbY, PsbZ, Psb30/Ycf12, at least 3 peripheral proteins of the oxygen-evolving complex and a large number of cofactors. It forms dimeric complexes. The D1/D2 heterodimer binds P680, chlorophylls that are the primary electron donor of PSII, and subsequent electron acceptors. It shares a non-heme iron and each subunit binds pheophytin, quinone, additional chlorophylls, carotenoids and lipids. D1 provides most of the ligands for the Mn4-Ca-O5 cluster of the oxygen-evolving complex (OEC). There is also a Cl(-1) ion associated with D1 and D2, which is required for oxygen evolution. The PSII complex binds additional chlorophylls, carotenoids and specific lipids. is required as a cofactor. Post-translationally, tyr-161 forms a radical intermediate that is referred to as redox-active TyrZ, YZ or Y-Z. In terms of processing, C-terminally processed by CTPA; processing is essential to allow assembly of the oxygen-evolving complex and thus photosynthetic growth.

Its subcellular location is the plastid. It localises to the chloroplast thylakoid membrane. The enzyme catalyses 2 a plastoquinone + 4 hnu + 2 H2O = 2 a plastoquinol + O2. Its function is as follows. Photosystem II (PSII) is a light-driven water:plastoquinone oxidoreductase that uses light energy to abstract electrons from H(2)O, generating O(2) and a proton gradient subsequently used for ATP formation. It consists of a core antenna complex that captures photons, and an electron transfer chain that converts photonic excitation into a charge separation. The D1/D2 (PsbA/PsbD) reaction center heterodimer binds P680, the primary electron donor of PSII as well as several subsequent electron acceptors. The chain is Photosystem II protein D1 from Dumortiera hirsuta (Liverwort).